Consider the following 457-residue polypeptide: Multidrug resistance protein MdtK (457 aa).

The next 12 helical transmembrane spans lie at 11–31, 53–73, 93–113, 127–147, 160–180, 188–208, 243–263, 276–296, 314–334, 350–370, 387–407, and 418–438; these read LLALAIPVILAQVAQTAMGFV, IWLPAILFGHGLLLALTPVIA, WLAGFVSVLVMIVLWNAGYII, AVGYLRALLWGAPGYLFFQVA, GMVMGFLGLLVNIPVNYIFIY, LGGIGCGVATAAVYWVMFIAM, LPIALALFFEVTLFAVVALLV, IALNFSSLMFVLPMSLAAAVT, AARTGLGVGICMAVVTAIFTV, VVALAAQLMLLAAVYQISDSI, IFFITFTAYWVLGLPSGYILA, and PAGFWMGFIIGLTSAAVLMML.

The protein belongs to the multi antimicrobial extrusion (MATE) (TC 2.A.66.1) family. MdtK subfamily.

The protein resides in the cell inner membrane. Multidrug efflux pump that functions probably as a Na(+)/drug antiporter. The polypeptide is Multidrug resistance protein MdtK (Salmonella enteritidis PT4 (strain P125109)).